Here is an 895-residue protein sequence, read N- to C-terminus: uncharacterized protein (895 aa).

A disordered region spans residues 257–283 (KSHKYPPGPPDNSSSNTSGQQNTSNTS). Low complexity predominate over residues 268 to 283 (NSSSNTSGQQNTSNTS).

This is an uncharacterized protein from Acanthamoeba polyphaga mimivirus (APMV).